The primary structure comprises 999 residues: MASNATFEVEIYGNTTKFENSLKGVNTAMSGLRGEAKNLRDALKLDPTNTDKMAQLQKNLQTQLGLSRDKATKLKQELSSVDKSSPAGQKKWLQLTRDLGTAETQANRLEGEIKQVEGAISSGSWDIDAKMDTKGVNSGIDGMKSRFSGLREIAVGVFRQIGSSAVSAVGNGLKGWVSDAMDTQKAMISLQNTLKFKGNGQDFDYVSKSMQTLAKDTNANTEDTLKLSTTFIGLGDSAKTAVGKTEALVKANQAFGGTGEQLKGVVQAYGQMSASGKVSAENINQLTDNNTALGSALKSTVMEMNPALKQYGSFASASEKGAISVEMLDKAMQKLGGAGGGAVTTIGDAWDSFNETLSLALLPTLDALTPIISSIIDKMAGWGESAGKALDSIVKYVKELWGALEKNGALSSLSKIWDGLKSTFGSVLSIIGQLIESFAGIDSKTGESAGSVENVSKTIANLAKGLADVIKKIADFAKKFSESKGAIDTLKTSLVALTAGFVAFKIGSGIITAISAFKKLQTAIQAGTGVMGAFNAVMAINPFVALGIAIAAIVAGLVYFFTQTETGKKAWASFVDFLKSAWDGIVSFFSGIGQWFADIWNGAVDGAKGIWQGLVDWFSGIVQGVQNIWNGITTFFTTLWTTVVTGIQTAWAGVTGFFTGLWDGIVNVVTTVFTTISSLVTGAYNWFVTTFQPLISFYKSIFGLVGSVINLAFQLILAIIRGAYQLVIGAWNGISGFFGVIFNAVSSVVSTVFSAIGSFAGSAWNVLVGVWNAVAGFFGGIFNAVKGVVSSAFSAIGSFASSAWGVVSSIWSAVSGFFSGIFNAVRSVVSGVFSALGGFASNAWGAITGIFSGVADFFSGVFDGAKNIVSGVFEAFGNFASNAWNAITGVFNGIGSFFSDIFGGVKNTIDSVLGGVTDTINNIKGSIDWVASKVGGLFKGSMVVGLTDVNLSSSGYGLSTNSVSSDNRTYNTFNVQGGAGQDVSNLARAIRREFELGRA.

The protein belongs to the skunalikevirus tape measure protein family.

The protein localises to the virion. Its function is as follows. Probable tape measure protein. Serves as a base for tail tube protein polymerization and acts as a template for tail length determination. This is Probable tape measure protein from Lactococcus lactis (Lactococcus lactis bacteriophage SK1).